The sequence spans 158 residues: Transcription elongation factor GreA (158 aa).

Positions glutamate 53–glutamine 73 form a coiled coil.

It belongs to the GreA/GreB family.

Its function is as follows. Necessary for efficient RNA polymerase transcription elongation past template-encoded arresting sites. The arresting sites in DNA have the property of trapping a certain fraction of elongating RNA polymerases that pass through, resulting in locked ternary complexes. Cleavage of the nascent transcript by cleavage factors such as GreA or GreB allows the resumption of elongation from the new 3'terminus. GreA releases sequences of 2 to 3 nucleotides. The polypeptide is Transcription elongation factor GreA (Pseudomonas aeruginosa (strain ATCC 15692 / DSM 22644 / CIP 104116 / JCM 14847 / LMG 12228 / 1C / PRS 101 / PAO1)).